The sequence spans 193 residues: Penicillin-binding protein activator LpoB (193 aa).

Positions Met-1–Gly-16 are cleaved as a signal peptide. A lipid anchor (N-palmitoyl cysteine) is attached at Cys-17. Residue Cys-17 is the site of S-diacylglycerol cysteine attachment. Positions Cys-17–Lys-55 are disordered. Low complexity predominate over residues Pro-28 to Thr-41.

It belongs to the LpoB family. Interacts with PBP1b.

The protein localises to the cell outer membrane. In terms of biological role, regulator of peptidoglycan synthesis that is essential for the function of penicillin-binding protein 1B (PBP1b). In Pectobacterium carotovorum subsp. carotovorum (strain PC1), this protein is Penicillin-binding protein activator LpoB.